The primary structure comprises 88 residues: UPF0147 protein Ta0600 (88 aa).

Belongs to the UPF0147 family.

In Thermoplasma acidophilum (strain ATCC 25905 / DSM 1728 / JCM 9062 / NBRC 15155 / AMRC-C165), this protein is UPF0147 protein Ta0600.